The chain runs to 261 residues: tRNA pseudouridine synthase A (261 aa).

The active-site Nucleophile is the D51. Substrate is bound at residue Y109.

The protein belongs to the tRNA pseudouridine synthase TruA family. Homodimer.

It carries out the reaction uridine(38/39/40) in tRNA = pseudouridine(38/39/40) in tRNA. Functionally, formation of pseudouridine at positions 38, 39 and 40 in the anticodon stem and loop of transfer RNAs. The polypeptide is tRNA pseudouridine synthase A (Idiomarina loihiensis (strain ATCC BAA-735 / DSM 15497 / L2-TR)).